We begin with the raw amino-acid sequence, 224 residues long: Putative cytochrome c-type biogenesis protein DbsD-like (224 aa).

5 helical membrane-spanning segments follow: residues 32–52 (FIFL…ILPV), 74–94 (FLFC…ATLI), 104–124 (GIPT…LNIV), 150–170 (GIGI…LVWI), and 176–196 (IFTG…PIII).

Belongs to the DsbD family.

The protein resides in the plastid. Its subcellular location is the chloroplast membrane. Functionally, could be involved in cytochrome c synthesis. In Pyropia yezoensis (Susabi-nori), this protein is Putative cytochrome c-type biogenesis protein DbsD-like.